Consider the following 90-residue polypeptide: MFSFRKFLAFMLIVIALMASFSSAQPIDEERPIFMERREASAFGDIIGELKGKGLGGRMRFGKRSSSPSDISMAELRAIYGGGPVEYVQL.

Residues 1–24 (MFSFRKFLAFMLIVIALMASFSSA) form the signal peptide. A propeptide spanning residues 25-36 (QPIDEERPIFME) is cleaved from the precursor. F61 carries the phenylalanine amide modification. Residues 65-90 (SSSPSDISMAELRAIYGGGPVEYVQL) constitute a propeptide that is removed on maturation.

Belongs to the FARP (FMRFamide related peptide) family.

It localises to the secreted. Its function is as follows. FMRFamides and FMRFamide-like peptides are neuropeptides. This Caenorhabditis briggsae protein is FMRFamide-like neuropeptides 27.